The chain runs to 425 residues: Kynureninase (425 aa).

Pyridoxal 5'-phosphate contacts are provided by residues Leu105, Thr106, 133–136 (FPSD), Asp218, His221, and Tyr243. Residue Lys244 is modified to N6-(pyridoxal phosphate)lysine. Pyridoxal 5'-phosphate-binding residues include Trp274 and Asn302.

This sequence belongs to the kynureninase family. Homodimer. Pyridoxal 5'-phosphate is required as a cofactor.

It catalyses the reaction L-kynurenine + H2O = anthranilate + L-alanine + H(+). The enzyme catalyses 3-hydroxy-L-kynurenine + H2O = 3-hydroxyanthranilate + L-alanine + H(+). It functions in the pathway amino-acid degradation; L-kynurenine degradation; L-alanine and anthranilate from L-kynurenine: step 1/1. Its pathway is cofactor biosynthesis; NAD(+) biosynthesis; quinolinate from L-kynurenine: step 2/3. Its function is as follows. Catalyzes the cleavage of L-kynurenine (L-Kyn) and L-3-hydroxykynurenine (L-3OHKyn) into anthranilic acid (AA) and 3-hydroxyanthranilic acid (3-OHAA), respectively. The chain is Kynureninase from Flavobacterium psychrophilum (strain ATCC 49511 / DSM 21280 / CIP 103535 / JIP02/86).